A 3095-amino-acid polypeptide reads, in one-letter code: Centrosome-associated protein 350 (3095 aa).

2 disordered regions span residues 1–24 and 63–105; these read MRSS…ETIQ and TKKS…RSPL. Positions 14–24 are enriched in polar residues; that stretch reads PRNSQSKETIQ. A phosphoserine mark is found at serine 84 and serine 140. Disordered regions lie at residues 219–239, 251–272, and 430–493; these read DEMP…LNNM, SDSS…KRQQ, and KILG…RAWS. A compositionally biased stretch (polar residues) spans 228–238; the sequence is SENNSKPSLNN. A compositionally biased stretch (low complexity) spans 251 to 265; that stretch reads SDSSPSSSACNSQRS. 2 stretches are compositionally biased toward basic and acidic residues: residues 438 to 457 and 464 to 476; these read MEQK…ERVA and GRAE…DVSH. Serine 468 bears the Phosphoserine mark. A compositionally biased stretch (low complexity) spans 481–491; it reads RSSARSRSSRA. Serine 503 is modified (phosphoserine). 2 disordered regions span residues 538-623 and 671-718; these read QAVR…QKNK and ARQH…PPQP. 2 stretches are compositionally biased toward basic and acidic residues: residues 587–623 and 690–699; these read YDTD…QKNK and ESDKENKIQE. The stretch at 596–641 forms a coiled coil; that stretch reads IVRQQEERRRRQHEEKKAQKEATEQKNKRLQELYRRQREAFSKAKT. Phosphoserine is present on serine 691. Positions 701–714 are enriched in low complexity; the sequence is PPSASSSSDLSLSE. Serine 874 and serine 935 each carry phosphoserine. Positions 977-996 are disordered; it reads SVSEGPLLSEGSLSEEEERR. Residues 979–988 are compositionally biased toward low complexity; the sequence is SEGPLLSEGS. The residue at position 1057 (serine 1057) is a Phosphoserine. Disordered stretches follow at residues 1099–1128 and 1151–1265; these read YEDD…GSSL and QHSS…SQKL. Residues 1119-1128 are compositionally biased toward polar residues; that stretch reads LESQVDGSSL. A compositionally biased stretch (low complexity) spans 1153–1168; that stretch reads SSGARSAGSTRSSSAS. A compositionally biased stretch (basic and acidic residues) spans 1194-1206; it reads DEEKVQSDSERGS. Residue serine 1200 is modified to Phosphoserine. Residues 1251 to 1265 are compositionally biased toward low complexity; it reads QKTPTSPLSPSSQKL. Residue threonine 1253 is modified to Phosphothreonine. Phosphoserine is present on residues serine 1256 and serine 1259. Residues 1363–1402 are a coiled coil; the sequence is IKAQQQRHERDLALLKLKAEQEALECQRQLEETRNKTAQV. 4 disordered regions span residues 1490-1668, 1720-1739, 1787-1864, and 1893-2017; these read AETD…GQDS, LRDK…QRGL, KLKS…QRRQ, and AWDK…PVKS. The span at 1503–1513 shows a compositional bias: basic and acidic residues; the sequence is QSKEGAVDSKR. 2 stretches are compositionally biased toward low complexity: residues 1517–1526 and 1536–1545; these read SPSRDSYSES and SSGSSRQDSP. Residues 1551-1564 are compositionally biased toward basic and acidic residues; the sequence is KENEKPFHGEKMES. Phosphoserine is present on serine 1606. Over residues 1624-1640 the composition is skewed to basic and acidic residues; the sequence is ESHRRFNMEKKRGHHDD. Residues serine 1641 and serine 1646 each carry the phosphoserine modification. A coiled-coil region spans residues 1700-1793; the sequence is KALKEKTKAE…LQEKLKSAGE (94 aa). A compositionally biased stretch (basic and acidic residues) spans 1787 to 1796; that stretch reads KLKSAGEKKL. A Phosphoserine modification is found at serine 1812. Residues 1819–1835 show a composition bias toward low complexity; the sequence is ETRSPSPISISSSETSS. Basic and acidic residues-rich tracts occupy residues 1845-1864 and 1894-1915; these read SRMD…QRRQ and WDKE…RTEQ. Residues 1850-1893 adopt a coiled-coil conformation; it reads KFLTKREQKLMQRRQHAEELLEWKRRLDAEEAEIQQMEKQALAA. At serine 1930 the chain carries Phosphoserine. Over residues 1980–1994 the composition is skewed to low complexity; it reads STSPSKHSPPKSCLS. Positions 1999–2011 are enriched in basic and acidic residues; it reads ESSKASHRTEGHC. A coiled-coil region spans residues 2043–2092; sequence IEGRIRALKDELRKRKSVVEQLKREQRKRQKERLKAQEASLLRQLETYDE. Serine 2108 bears the Phosphoserine mark. 4 disordered regions span residues 2116–2155, 2191–2265, 2286–2427, and 2440–2471; these read KTLS…GSLA, IEHL…VEDA, LSSK…EISE, and VHSE…GGTE. A compositionally biased stretch (basic and acidic residues) spans 2133-2151; sequence HRSETAKTWKSVTESERSR. The residue at position 2198 (serine 2198) is a Phosphoserine. Composition is skewed to basic and acidic residues over residues 2202–2214 and 2227–2259; these read SSRK…RDSL and NAPD…KLES. Polar residues predominate over residues 2286 to 2300; it reads LSSKELPSDSANVQQ. Basic and acidic residues predominate over residues 2301–2331; the sequence is DLDKPATETSHEKEEALKEDQSNHSTDDRSP. The span at 2349 to 2362 shows a compositional bias: polar residues; the sequence is DSTCSGQLSVPKES. Basic and acidic residues-rich tracts occupy residues 2377–2387 and 2395–2407; these read ISADEISKDDS and LRKD…DRSQ. A compositionally biased stretch (low complexity) spans 2409-2420; it reads TRSSRSRATGSG. Phosphoserine is present on residues serine 2421 and serine 2450. Over residues 2455–2465 the composition is skewed to basic and acidic residues; it reads MKSKERSDVGH. In terms of domain architecture, CAP-Gly spans 2504–2546; the sequence is GETDFAKGFWAGVELDKPEGNNNGTYDGIVYFVCKDKHGIFAP. Threonine 2671 is modified (phosphothreonine). Positions 2700–2731 form a coiled coil; it reads LLDLLTREKNQLEAQLKSSISEEKKSKQQLET. Positions 2767 to 2793 are disordered; sequence QEFLDQKKVPPQDLPQNTEEQSPSVPS. The segment covering 2780–2791 has biased composition (polar residues); it reads LPQNTEEQSPSV. Residues serine 2809 and serine 2818 each carry the phosphoserine modification.

In terms of assembly, part of a ternary complex that contains CEP350, CEP43 and MAPRE1. Interacts (via C-terminus) directly with CEP43 (via N-terminus). Interacts with NR1H3, PPARA, PPARD and PPARG. Interacts directly with microtubules. Interacts with the fusion protein CEP43-FGFR1, and by doing so recruits and activates PI3K and PLC-gamma. Interacts with CYLD. Interacts with CFAP157. Interacts with CEP19 (via C-terminus). Interacts with CEP78; promoting CEP78 localization to centrosome and centriole. In terms of processing, phosphorylated during mitosis.

It localises to the cytoplasm. It is found in the cytoskeleton. The protein resides in the microtubule organizing center. Its subcellular location is the centrosome. The protein localises to the spindle. It localises to the nucleus. It is found in the centriole. The protein resides in the cilium basal body. Functionally, plays an essential role in centriole growth by stabilizing a procentriolar seed composed of at least, SASS6 and CPAP. Required for anchoring microtubules to the centrosomes and for the integrity of the microtubule network. Recruits PPARA to discrete subcellular compartments and thereby modulates PPARA activity. Required for ciliation. This is Centrosome-associated protein 350 from Mus musculus (Mouse).